A 393-amino-acid polypeptide reads, in one-letter code: Protein TsgA (393 aa).

Helical transmembrane passes span 11–31 (WISFLSYALTGALVIVTGMVM), 51–71 (FLNAGILISIFLNAWLMEIVP), 78–98 (FGFLLMVLAVAGLMFSHSLAL), 101–121 (AAMFILGVVSGITMSIGTFLI), 134–154 (LLFTDSFFSMAGMIFPMIAAF), 162–182 (WYWVYACIGLVYVAIFILTFG), 206–226 (IGVLFLSVAALCYILGQLGFI), 245–265 (TLVSNFWMSYMVGMWAFSFIL), 273–293 (ILTVLAGLAAILMYVFNTGTP), 297–317 (AWSILTLGFFSSAIYTTIITL), 332–352 (FVLTCGTIGTMLTFVVTGPIV), and 361–381 (LLTANGLYAVVFVMCFLLGFV).

Belongs to the major facilitator superfamily. TsgA family.

It is found in the cell inner membrane. The polypeptide is Protein TsgA (Shigella dysenteriae serotype 1 (strain Sd197)).